A 138-amino-acid polypeptide reads, in one-letter code: Basic phospholipase A2 Sct-N6 (138 aa).

Residues 1–16 (MRTFWIVAVLLVGVEG) form the signal peptide. Cystine bridges form between Cys-42–Cys-131, Cys-44–Cys-60, Cys-59–Cys-111, Cys-65–Cys-138, Cys-66–Cys-104, Cys-73–Cys-97, and Cys-91–Cys-102. Positions 43, 45, and 47 each coordinate Ca(2+). Residue His-63 is part of the active site. Residue Asp-64 coordinates Ca(2+). Asp-105 is an active-site residue.

This sequence belongs to the phospholipase A2 family. Group II subfamily. D49 sub-subfamily. Ca(2+) is required as a cofactor. In terms of tissue distribution, expressed by the venom gland.

The protein localises to the secreted. It carries out the reaction a 1,2-diacyl-sn-glycero-3-phosphocholine + H2O = a 1-acyl-sn-glycero-3-phosphocholine + a fatty acid + H(+). Snake venom phospholipase A2 (PLA2) that displays edema-inducing activities, as well as presynaptic neurotoxicity and low myotoxicity. PLA2 catalyzes the calcium-dependent hydrolysis of the 2-acyl groups in 3-sn-phosphoglycerides. This is Basic phospholipase A2 Sct-N6 from Sistrurus tergeminus (Western massasauga).